We begin with the raw amino-acid sequence, 100 residues long: NADH-quinone oxidoreductase subunit K (100 aa).

The next 3 helical transmembrane spans lie at 4 to 24 (LQHG…GLVI), 28 to 48 (LLFM…AFVV), and 60 to 80 (VMYI…LALL).

This sequence belongs to the complex I subunit 4L family. NDH-1 is composed of 13 different subunits. Subunits NuoA, H, J, K, L, M, N constitute the membrane sector of the complex.

Its subcellular location is the cell inner membrane. It carries out the reaction a quinone + NADH + 5 H(+)(in) = a quinol + NAD(+) + 4 H(+)(out). Its function is as follows. NDH-1 shuttles electrons from NADH, via FMN and iron-sulfur (Fe-S) centers, to quinones in the respiratory chain. The immediate electron acceptor for the enzyme in this species is believed to be ubiquinone. Couples the redox reaction to proton translocation (for every two electrons transferred, four hydrogen ions are translocated across the cytoplasmic membrane), and thus conserves the redox energy in a proton gradient. The polypeptide is NADH-quinone oxidoreductase subunit K (Citrobacter koseri (strain ATCC BAA-895 / CDC 4225-83 / SGSC4696)).